The primary structure comprises 591 residues: CTP synthase 1-B (591 aa).

The Glutamine amidotransferase type-1 domain occupies 300-554; it reads SIALVGKYTK…LASVGRLSQY (255 aa). Active-site for GATase activity residues include C399, H526, and E528. Residues 562 to 572 show a composition bias toward basic and acidic residues; sequence SPRDTYSDRSE. The segment at 562-581 is disordered; the sequence is SPRDTYSDRSENSSPDAEIA.

Belongs to the CTP synthase family.

The enzyme catalyses UTP + L-glutamine + ATP + H2O = CTP + L-glutamate + ADP + phosphate + 2 H(+). Its pathway is pyrimidine metabolism; CTP biosynthesis via de novo pathway; CTP from UDP: step 2/2. In terms of biological role, this enzyme is involved in the de novo synthesis of CTP, a precursor of DNA, RNA and phospholipids. Catalyzes the ATP-dependent amination of UTP to CTP with either L-glutamine or ammonia as a source of nitrogen. In Xenopus laevis (African clawed frog), this protein is CTP synthase 1-B (ctps1-b).